Here is a 31-residue protein sequence, read N- to C-terminus: Dermaseptin-7.2TR (31 aa).

Glu31 carries the post-translational modification Glutamic acid 1-amide.

Expressed by the skin glands.

The protein resides in the secreted. In terms of biological role, has antimicrobial activity. The polypeptide is Dermaseptin-7.2TR (Phyllomedusa trinitatis (Trinidad leaf frog)).